The primary structure comprises 90 residues: Cell division topological specificity factor (90 aa).

Belongs to the MinE family.

Its function is as follows. Prevents the cell division inhibition by proteins MinC and MinD at internal division sites while permitting inhibition at polar sites. This ensures cell division at the proper site by restricting the formation of a division septum at the midpoint of the long axis of the cell. The protein is Cell division topological specificity factor of Bordetella avium (strain 197N).